Consider the following 128-residue polypeptide: Glycine cleavage system H protein (128 aa).

Positions 25-107 (TFKVGITDHA…YEAGWLFTVR (83 aa)) constitute a Lipoyl-binding domain. Lys66 bears the N6-lipoyllysine mark.

Belongs to the GcvH family. In terms of assembly, the glycine cleavage system is composed of four proteins: P, T, L and H. Requires (R)-lipoate as cofactor.

The glycine cleavage system catalyzes the degradation of glycine. The H protein shuttles the methylamine group of glycine from the P protein to the T protein. The polypeptide is Glycine cleavage system H protein (Kocuria rhizophila (strain ATCC 9341 / DSM 348 / NBRC 103217 / DC2201)).